Here is a 557-residue protein sequence, read N- to C-terminus: MSDGTASARSSSPLDRDPAFRVITVTKETGLGLKILGGINRNEGPLVYIHEVIPGGDCYKDGRLKPGDQLVSINKESMIGVSFEEAKSIITRAKLRSESPWEIAFIRQKSYCGHPGNICCPSPQVSEDCGPQTSTFTLLSSPSETLLPKTSSTPQTQDSTFPSCKAIQTKPEHDKTEHSPITSLDNSPADTSNADIAPAWTDDDSGPQGKISLNPSVRLKAEKLEMALNYLGIQPTKEQREALREQVQADSKGTVSFGDFVQVARSLFCLQLDEVNVGVHEIPSILDSQLLPCDSLEADEVGKLRQERNAALEERNVLKEKLLESEKHRKQLIEELQNVKQEAKAVAEETRALRSRIHLAEAAQRQAHGMEMDYEEVIRLLEAEVSELKAQLADYSDQNKESVQDLRKRVTVLDCQLRKSEMARKAFKASTERLLGFIEAIQEVLLDSSAPLSTLSERRAVLASQTSLPLLARNGRSFPATLLLESKELVRSVRAILDMDCLPYGWEEAYTADGIKYFINHVTQTTSWIHPVMSALNLSCAEESEEDCPRELTDPKS.

Phosphoserine occurs at positions 10 and 12. Residues 19-105 form the PDZ domain; it reads AFRVITVTKE…RSESPWEIAF (87 aa). Phosphoserine; by PKB/AKT2 is present on serine 99. Residues 142–154 show a composition bias toward low complexity; sequence PSETLLPKTSSTP. The tract at residues 142–214 is disordered; sequence PSETLLPKTS…SGPQGKISLN (73 aa). The span at 179 to 194 shows a compositional bias: polar residues; sequence SPITSLDNSPADTSNA. Residue serine 216 is modified to Phosphoserine. The stretch at 298-408 forms a coiled coil; it reads ADEVGKLRQE…NKESVQDLRK (111 aa). Serine 467 bears the Phosphoserine mark. Residues 500–533 form the WW domain; that stretch reads DCLPYGWEEAYTADGIKYFINHVTQTTSWIHPVM.

Interacts with STX4A. In terms of processing, phosphorylated on Ser-99 by PKB/AKT2 after insulin treatment. Phosphorylation on Ser-99 abolishes the interaction with STX4A. Detected in skeletal muscle, heart, testis, adipocytes and pancreatic islet cells.

The protein resides in the cytoplasm. Its function is as follows. Plays a role in the translocation of transport vesicles from the cytoplasm to the plasma membrane. Inhibits the translocation of SLC2A4 from intracellular vesicles to the plasma membrane by STX4A binding and preventing the interaction between STX4A and VAMP2. Stimulation with insulin disrupts the interaction with STX4A, leading to increased levels of SLC2A4 at the plasma membrane. May also play a role in the regulation of insulin release by pancreatic beta cells after stimulation by glucose. The polypeptide is Syntaxin-binding protein 4 (Stxbp4) (Mus musculus (Mouse)).